The chain runs to 275 residues: Putative carbamate hydrolase RutD (275 aa).

The protein belongs to the AB hydrolase superfamily. Hydrolase RutD family.

It catalyses the reaction carbamate + 2 H(+) = NH4(+) + CO2. Involved in pyrimidine catabolism. May facilitate the hydrolysis of carbamate, a reaction that can also occur spontaneously. This Escherichia coli (strain UTI89 / UPEC) protein is Putative carbamate hydrolase RutD.